Here is a 292-residue protein sequence, read N- to C-terminus: MSADKLPKALQATEDDIQLLLAAQCHLGTKNCDKSMENYVWKRRADGIHVINVGKTWEKLVLAARVLATIENPNDVCVISARPYGHRAVLKYGSFTGAQAIAGRFTPGSFTNYITRSFKEPRVIIVTDPRVDHQAIREAAYVNIPVIAFCDTDASTKFVDIAIPANNKSRHSIGLMWYLLCREVLRLRGTVPRGPTGPSGWDVLPDLFFYRDPEEIEREAAEKAAAAAAQEGADAEAAATSAAAGVTAEYDAGNAADAVLAAQPTETALDWSDEPVAGDWAAEPAADAQGGW.

The disordered stretch occupies residues 265–292; the sequence is TETALDWSDEPVAGDWAAEPAADAQGGW. The span at 277–292 shows a compositional bias: low complexity; it reads AGDWAAEPAADAQGGW.

It belongs to the universal ribosomal protein uS2 family. As to quaternary structure, component of the small ribosomal subunit. Mature ribosomes consist of a small (40S) and a large (60S) subunit. The 40S subunit contains about 33 different proteins and 1 molecule of RNA (18S). The 60S subunit contains about 49 different proteins and 3 molecules of RNA (25S, 5.8S and 5S). Interacts with RPS21.

The protein localises to the cytoplasm. Its function is as follows. Required for the assembly and/or stability of the 40S ribosomal subunit. Required for the processing of the 20S rRNA-precursor to mature 18S rRNA in a late step of the maturation of 40S ribosomal subunits. In Cryptococcus neoformans var. neoformans serotype D (strain B-3501A) (Filobasidiella neoformans), this protein is Small ribosomal subunit protein uS2.